The primary structure comprises 292 residues: ATP synthase gamma chain (292 aa).

Belongs to the ATPase gamma chain family. As to quaternary structure, F-type ATPases have 2 components, CF(1) - the catalytic core - and CF(0) - the membrane proton channel. CF(1) has five subunits: alpha(3), beta(3), gamma(1), delta(1), epsilon(1). CF(0) has three main subunits: a, b and c.

It localises to the cell inner membrane. Functionally, produces ATP from ADP in the presence of a proton gradient across the membrane. The gamma chain is believed to be important in regulating ATPase activity and the flow of protons through the CF(0) complex. The chain is ATP synthase gamma chain from Chlorobaculum tepidum (strain ATCC 49652 / DSM 12025 / NBRC 103806 / TLS) (Chlorobium tepidum).